The chain runs to 306 residues: 26S proteasome regulatory subunit RPN11 (306 aa).

The MPN domain occupies 27-162 (VYISSIALLK…IDAFRLIDTG (136 aa)). Zn(2+)-binding residues include His109, His111, and Asp122. The short motif at 109 to 122 (HSHPGFGCWLSSVD) is the JAMM motif element.

This sequence belongs to the peptidase M67A family.

Its function is as follows. Acts as a regulatory subunit of the 26 proteasome which is involved in the ATP-dependent degradation of ubiquitinated proteins. This is 26S proteasome regulatory subunit RPN11 (RPN11) from Candida glabrata (strain ATCC 2001 / BCRC 20586 / JCM 3761 / NBRC 0622 / NRRL Y-65 / CBS 138) (Yeast).